The primary structure comprises 1515 residues: Neurite extension and migration factor (1515 aa).

The segment covering 381–405 (DKKKGKEEVHEDKSIETKDEKDNGE) has biased composition (basic and acidic residues). 6 disordered regions span residues 381–415 (DKKK…KPCG), 505–529 (VNER…PKKR), 731–774 (KKIK…HMSE), 1158–1225 (FDEP…TKKG), 1372–1422 (TPQE…EDSR), and 1435–1479 (TLGN…AGTT). Composition is skewed to polar residues over residues 746–757 (SPVSEDTSSKAN) and 763–772 (TPGTSNSSHM). A compositionally biased stretch (low complexity) spans 1180 to 1193 (PGKSGAVSQSSSQK). Over residues 1442-1452 (THKKLYRHKSS) the composition is skewed to basic residues. A compositionally biased stretch (basic and acidic residues) spans 1455–1479 (GLRDEKYKGKRVEREQAHKDEAGTT).

Expressed in the brain, particularly during the late embryonic and perinatal stages of development. In the developing brain, it is expressed only in the cortical plate and subplate region but not in the intermediate or ventricular zone.

The protein resides in the nucleus. It localises to the cytoplasm. In terms of biological role, involved in neurite outgrowth by regulating cell-cell adhesion via the N-cadherin signaling pathway. May act by regulating expression of protein-coding genes, such as N-cadherins and integrin beta-1 (ITGB1). This Mus musculus (Mouse) protein is Neurite extension and migration factor.